A 431-amino-acid chain; its full sequence is Peptidase B (431 aa).

Mn(2+)-binding residues include lysine 196 and aspartate 201. The active site involves lysine 208. Residues aspartate 219, aspartate 278, and glutamate 280 each contribute to the Mn(2+) site. Arginine 282 is an active-site residue.

This sequence belongs to the peptidase M17 family. As to quaternary structure, homohexamer. It depends on Mn(2+) as a cofactor.

It localises to the cytoplasm. The enzyme catalyses Release of an N-terminal amino acid, Xaa, from a peptide or arylamide. Xaa is preferably Glu or Asp but may be other amino acids, including Leu, Met, His, Cys and Gln.. Probably plays an important role in intracellular peptide degradation. This is Peptidase B from Serratia proteamaculans (strain 568).